A 610-amino-acid polypeptide reads, in one-letter code: Elongation factor 4 (610 aa).

The region spanning 13–195 (SHIRNFSIVA…AIVNRLPAPK (183 aa)) is the tr-type G domain. Residues 25–30 (DHGKST) and 142–145 (NKID) each bind GTP.

This sequence belongs to the TRAFAC class translation factor GTPase superfamily. Classic translation factor GTPase family. LepA subfamily.

The protein resides in the cell inner membrane. It carries out the reaction GTP + H2O = GDP + phosphate + H(+). Functionally, required for accurate and efficient protein synthesis under certain stress conditions. May act as a fidelity factor of the translation reaction, by catalyzing a one-codon backward translocation of tRNAs on improperly translocated ribosomes. Back-translocation proceeds from a post-translocation (POST) complex to a pre-translocation (PRE) complex, thus giving elongation factor G a second chance to translocate the tRNAs correctly. Binds to ribosomes in a GTP-dependent manner. This Rhizobium leguminosarum bv. trifolii (strain WSM2304) protein is Elongation factor 4.